Here is a 790-residue protein sequence, read N- to C-terminus: Endonuclease MutS2 (790 aa).

Residue 334–341 (GPNTGGKT) participates in ATP binding. A Smr domain is found at 713–788 (LDVRGMTLDD…GDGVTIVELH (76 aa)).

This sequence belongs to the DNA mismatch repair MutS family. MutS2 subfamily. Homodimer. Binds to stalled ribosomes, contacting rRNA.

Endonuclease that is involved in the suppression of homologous recombination and thus may have a key role in the control of bacterial genetic diversity. Its function is as follows. Acts as a ribosome collision sensor, splitting the ribosome into its 2 subunits. Detects stalled/collided 70S ribosomes which it binds and splits by an ATP-hydrolysis driven conformational change. Acts upstream of the ribosome quality control system (RQC), a ribosome-associated complex that mediates the extraction of incompletely synthesized nascent chains from stalled ribosomes and their subsequent degradation. Probably generates substrates for RQC. This chain is Endonuclease MutS2, found in Caldanaerobacter subterraneus subsp. tengcongensis (strain DSM 15242 / JCM 11007 / NBRC 100824 / MB4) (Thermoanaerobacter tengcongensis).